The chain runs to 138 residues: Putative pre-16S rRNA nuclease (138 aa).

The protein belongs to the YqgF nuclease family.

The protein localises to the cytoplasm. In terms of biological role, could be a nuclease involved in processing of the 5'-end of pre-16S rRNA. The sequence is that of Putative pre-16S rRNA nuclease from Bacteroides fragilis (strain ATCC 25285 / DSM 2151 / CCUG 4856 / JCM 11019 / LMG 10263 / NCTC 9343 / Onslow / VPI 2553 / EN-2).